We begin with the raw amino-acid sequence, 552 residues long: Urocanate hydratase (552 aa).

NAD(+)-binding positions include 49–50 (GG), Gln-127, 173–175 (GMG), Asp-193, 239–240 (NA), 260–264 (QTSAH), 270–271 (YI), and Tyr-319. Residue Cys-407 is part of the active site. Position 489 (Gly-489) interacts with NAD(+).

The protein belongs to the urocanase family. NAD(+) is required as a cofactor.

Its subcellular location is the cytoplasm. The enzyme catalyses 4-imidazolone-5-propanoate = trans-urocanate + H2O. It functions in the pathway amino-acid degradation; L-histidine degradation into L-glutamate; N-formimidoyl-L-glutamate from L-histidine: step 2/3. In terms of biological role, catalyzes the conversion of urocanate to 4-imidazolone-5-propionate. This chain is Urocanate hydratase, found in Bacillus cereus (strain AH187).